The following is a 74-amino-acid chain: Defensin-like protein 39 (74 aa).

A signal peptide spans 1 to 28; that stretch reads MEKKSLAALSFLLLLVLFVAQEIVVTEA. 4 disulfide bridges follow: cysteine 31–cysteine 74, cysteine 42–cysteine 63, cysteine 48–cysteine 68, and cysteine 52–cysteine 70.

This sequence belongs to the DEFL family. As to expression, pods.

Its subcellular location is the secreted. Functionally, possesses antifungal activity. This chain is Defensin-like protein 39 (PI39), found in Pisum sativum (Garden pea).